The primary structure comprises 160 residues: Ribosomal RNA large subunit methyltransferase H (160 aa).

S-adenosyl-L-methionine-binding positions include Leu76, Gly108, and 127–132; that span reads LGKMTW.

This sequence belongs to the RNA methyltransferase RlmH family. In terms of assembly, homodimer.

The protein resides in the cytoplasm. It catalyses the reaction pseudouridine(1915) in 23S rRNA + S-adenosyl-L-methionine = N(3)-methylpseudouridine(1915) in 23S rRNA + S-adenosyl-L-homocysteine + H(+). In terms of biological role, specifically methylates the pseudouridine at position 1915 (m3Psi1915) in 23S rRNA. The chain is Ribosomal RNA large subunit methyltransferase H from Sinorhizobium medicae (strain WSM419) (Ensifer medicae).